Consider the following 506-residue polypeptide: D-alanine--D-alanyl carrier protein ligase (506 aa).

152 to 153 is a binding site for ATP; the sequence is TS. Position 197 (aspartate 197) interacts with D-alanine. An ATP-binding site is contributed by 292–297; that stretch reads NTYGPT. Valine 301 contributes to the D-alanine binding site. Residues aspartate 383, 395–398, and lysine 494 contribute to the ATP site; that span reads YRGR. A D-alanine-binding site is contributed by lysine 494.

This sequence belongs to the ATP-dependent AMP-binding enzyme family. DltA subfamily.

It localises to the cytoplasm. The catalysed reaction is holo-[D-alanyl-carrier protein] + D-alanine + ATP = D-alanyl-[D-alanyl-carrier protein] + AMP + diphosphate. Its pathway is cell wall biogenesis; lipoteichoic acid biosynthesis. Functionally, catalyzes the first step in the D-alanylation of lipoteichoic acid (LTA), the activation of D-alanine and its transfer onto the D-alanyl carrier protein (Dcp) DltC. In an ATP-dependent two-step reaction, forms a high energy D-alanyl-AMP intermediate, followed by transfer of the D-alanyl residue as a thiol ester to the phosphopantheinyl prosthetic group of the Dcp. D-alanylation of LTA plays an important role in modulating the properties of the cell wall in Gram-positive bacteria, influencing the net charge of the cell wall. In Lacticaseibacillus rhamnosus (Lactobacillus rhamnosus), this protein is D-alanine--D-alanyl carrier protein ligase.